A 396-amino-acid polypeptide reads, in one-letter code: FAD-dependent monooxygenase phomE' (396 aa).

Glutamate 3 is an FAD binding site. Active-site residues include arginine 158 and tyrosine 196. FAD-binding residues include aspartate 277 and glycine 290.

The protein belongs to the paxM FAD-dependent monooxygenase family. Monomer. FAD is required as a cofactor.

Its function is as follows. FAD-dependent monooxygenase; part of the gene cluster that mediates the biosynthesis of the phomopsins, a group of hexapeptide mycotoxins which infects lupins and causes lupinosis disease in livestock. The role of phomE' within the phomopsins biosynthesis pathway has still to be determined. The pathway starts with the processing of the precursor phomA by several endopeptidases including kexin proteases as well as the cluster-specific S41 family peptidase phomP1 and the oligopeptidase phomG to produce 10 identical copies of the hexapeptide Tyr-Val-Ile-Pro-Ile-Asp. After being excised from the precursor peptide, the core peptides are cyclized and modified post-translationally by enzymes encoded within the gene cluster. The timing and order of proteolysis of the phomA precursor and PTMs are still unknown. Two tyrosinase-like enzymes, phomQ1 and phomQ2, catalyze the chlorination and hydroxylation of Tyr, respectively. PhomYb, is proposed to be involved in the construction of the macrocyclic structure. The other 4 ustYa family proteins may be involved in PTMs that generate the unique structure of phomopsin A. PhomYa is required for the hydroxylation of C-beta of Tyr. PhomYc, phomYd, and phomYe are responsible for the biosynthesis of 2,3-dehydroisoleucine (dIle), 2,3-dehydroaspartic acid (dAsp), and 3,4-dehydroproline (dPro), respectively. While dIle formation by phomYc is indispensable for the installation of dAsp by phomYd, the order of the other PTMs have not been elucidated yet. Most of the biosynthetic enzymes likely have broad substrate specificity, and thus, there might be a metabolic grid from a precursor to phomopsin A. The enzyme(s) responsible for the biosynthesis of 3,4-dehydrovaline (dVal) have also not been identified yet. Finally, phomM acts as an S-adenosylmethionine-dependent alpha-N-methyltransferase that catalyzes two successive N-methylation reactions, converting N-desmethyl-phomopsin A to phomopsin A and phomopsin A further to an N,N-dimethylated congener called phomopsin E. The protein is FAD-dependent monooxygenase phomE' of Diaporthe leptostromiformis (Lupinosis disease fungus).